Consider the following 1693-residue polypeptide: uncharacterized protein (1693 aa).

16 WD repeats span residues 1008–1042, 1053–1083, 1094–1124, 1135–1165, 1176–1206, 1217–1247, 1258–1288, 1299–1329, 1340–1370, 1381–1411, 1422–1452, 1463–1493, 1504–1534, 1545–1575, 1586–1616, and 1627–1657; these read HHEG…YLWS, GHQE…KLWQ, GHED…RIWN, GHAD…RLWD, GHTS…RLWD, GHQN…RVWS, GHDH…RLWT, GHQK…RQWD, GHSH…RLWT, DHQG…QLWN, GHQD…RVWN, HYEK…GIWE, GHEG…RIWD, GHQS…RLWD, GHQG…RLWD, and GHGN…KLWP.

This is an uncharacterized protein from Synechocystis sp. (strain ATCC 27184 / PCC 6803 / Kazusa).